Here is a 507-residue protein sequence, read N- to C-terminus: MGRKKIQITRIMDERNRQVTFTKRKFGLMKKAYELSVLCDCEIALIIFNSSNKLFQYASTDMDKVLLKYTEYNEPHESGTNSDIVEALNKKEHRGCDSPDPDTSYVLTPHTEEKYKKINEEFDNMMRNHKIAPGLPPQNFSMSVTVPVTSPNALSYTNPGSSLVSPSLAASSTLADSSMLSPPQATLHRNVSPGAPQRPPSTGSAGGMLSTSDLTVPNGAGSSPVGNGFVNSRASPNLVGTTGANSLGKVMPTESPPPPGGGNLGMNSRKPDLRVVIPPSSKGMMPPLSEEEELELNTQRISSSQAPQPLATPVVSVTTPSLPQQGLVYSAMPTAYNTDYSLTSADLSALQGFNSPGMLSLGQVSAWQQHHLGQAALSSLVAGGQLSQGSNLSINTNQNINIKSEPISPPRDRMTPSGFQQQQPPPPSQAPQPQPPQPQPQPQPQARQEMGRSPVDSLSSSSSSYDGSDREDPRGDFHSPVVLGRPPNTEDRESPSVKRMRMDAWVT.

Residues 3-57 (RKKIQITRIMDERNRQVTFTKRKFGLMKKAYELSVLCDCEIALIIFNSSNKLFQY) form the MADS-box domain. The segment at residues 58–86 (ASTDMDKVLLKYTEYNEPHESGTNSDIVE) is a DNA-binding region (mef2-type). At serine 59 the chain carries Phosphoserine; by CK2. Phosphoserine is present on residues serine 98 and serine 235. The interval 175–269 (ADSSMLSPPQ…GGGNLGMNSR (95 aa)) is disordered. The span at 209-245 (LSTSDLTVPNGAGSSPVGNGFVNSRASPNLVGTTGAN) shows a compositional bias: polar residues. Lysine 249 is modified (N6-acetyllysine). Position 255 is a phosphoserine (serine 255). Residues 266-283 (MNSRKPDLRVVIPPSSKG) form a required for interaction with MAPKs region. A beta domain region spans residues 289–296 (SEEEELEL). Phosphothreonine; by MAPK7 and MAPK14 is present on residues threonine 312 and threonine 319. Serine 355 bears the Phosphoserine; by MAPK7 mark. The span at 390 to 402 (SNLSINTNQNINI) shows a compositional bias: polar residues. Residues 390-507 (SNLSINTNQN…KRMRMDAWVT (118 aa)) are disordered. Lysine 403 carries the post-translational modification N6-acetyllysine; alternate. Residue lysine 403 forms a Glycyl lysine isopeptide (Lys-Gly) (interchain with G-Cter in SUMO); alternate linkage. Serine 408 carries the phosphoserine; by CDK5 modification. Threonine 415 carries the phosphothreonine modification. A compositionally biased stretch (pro residues) spans 423–443 (QPPPPSQAPQPQPPQPQPQPQ). Position 453 is a phosphoserine (serine 453). Positions 453–466 (SPVDSLSSSSSSYD) are enriched in low complexity. Composition is skewed to basic and acidic residues over residues 467–477 (GSDREDPRGDF) and 488–507 (NTED…AWVT).

The protein belongs to the MEF2 family. As to quaternary structure, binds DNA as a homo- or heterodimer. Dimerizes with MEF2D. Interacts with HDAC7. Interacts with PIAS1; the interaction enhances sumoylation. Interacts with HDAC4, HDAC9 and SLC2A4RG. Interacts (via the N-terminal) with MAPK7; the interaction results in the phosphorylation and transcriptional activity of MEF2A. Constitutive phosphorylation on Ser-408 promotes Lys-403 sumoylation thus preventing acetylation at this site. Dephosphorylation on Ser-408 by PPP3CA upon neuron depolarization promotes a switch from sumoylation to acetylation on residue Lys-403 leading to inhibition of dendrite claw differentiation. Phosphorylation on Thr-312 and Thr-319 are the main sites involved in p38 MAPK signaling and activate transcription. Phosphorylated on these sites by MAPK14/p38alpha and MAPK11/p38beta, but not by MAPK13/p38delta nor by MAPK12/p38gamma. Phosphorylation on Ser-408 by CDK5 induced by neurotoxicity inhibits MEF2A transcriptional activation leading to apoptosis of cortical neurons. Phosphorylation on Thr-312, Thr-319 and Ser-355 can be induced by EGF. Post-translationally, sumoylation on Lys-403 is enhanced by PIAS1 and represses transcriptional activity. Phosphorylation on Ser-408 is required for sumoylation. Has no effect on nuclear location nor on DNA binding. Sumoylated with SUMO1 and, to a lesser extent with SUMO2 and SUMO3. PIASx facilitates sumoylation in postsynaptic dendrites in the cerebellar cortex and promotes their morphogenesis. In terms of processing, acetylation on Lys-403 activates transcriptional activity. Acetylated by p300 on several sites in diffentiating myocytes. Acetylation on Lys-4 increases DNA binding and transactivation. Hyperacetylation by p300 leads to enhanced cardiac myocyte growth and heart failure. Proteolytically cleaved on several sites by caspase 3 and caspase 7 following neurotoxicity. Preferentially cleaves the CDK5-mediated hyperphosphorylated form which leads to cortical neuron apoptosis and transcriptional inactivation.

Its subcellular location is the nucleus. Its function is as follows. Transcriptional activator which binds specifically to the MEF2 element, 5'-YTA[AT](4)TAR-3', found in numerous muscle-specific genes. Also involved in the activation of numerous growth factor- and stress-induced genes. Mediates cellular functions not only in skeletal and cardiac muscle development, but also in neuronal differentiation and survival. Plays diverse roles in the control of cell growth, survival and apoptosis via p38 MAPK signaling in muscle-specific and/or growth factor-related transcription. In cerebellar granule neurons, phosphorylated and sumoylated MEF2A represses transcription of NUR77 promoting synaptic differentiation. Associates with chromatin to the ZNF16 promoter. The chain is Myocyte-specific enhancer factor 2A (MEF2A) from Sus scrofa (Pig).